We begin with the raw amino-acid sequence, 867 residues long: Nitrate reductase [NADPH] (867 aa).

Positions 38 to 58 (DIPLPPPSKEPTEVLSIDKPT) are disordered. C152 is a binding site for Mo-molybdopterin. One can recognise a Cytochrome b5 heme-binding domain in the interval 514 to 589 (NRIIDLQEFK…MPDYHIGTMD (76 aa)). Heme contacts are provided by H549 and H572. One can recognise an FAD-binding FR-type domain in the interval 615–726 (KSWTKATLVK…KGPTGRFEYL (112 aa)). FAD is bound by residues 669–672 (RSYT), 686–690 (LVKIY), F691, 700–702 (KMT), and T753. Position 837-846 (837-846 (MVLICGPEAM)) interacts with NADP(+).

It belongs to the nitrate reductase family. As to quaternary structure, homodimer. FAD is required as a cofactor. Requires heme as cofactor. Mo-molybdopterin serves as cofactor.

It catalyses the reaction nitrite + NADP(+) + H2O = nitrate + NADPH + H(+). In terms of biological role, nitrate reductase is a key enzyme involved in the first step of nitrate assimilation in plants, fungi and bacteria. The chain is Nitrate reductase [NADPH] (niaD) from Aspergillus niger.